A 245-amino-acid chain; its full sequence is 1-(5-phosphoribosyl)-5-[(5-phosphoribosylamino)methylideneamino] imidazole-4-carboxamide isomerase (245 aa).

Asp11 (proton acceptor) is an active-site residue. Asp132 functions as the Proton donor in the catalytic mechanism.

This sequence belongs to the HisA/HisF family.

It is found in the cytoplasm. The catalysed reaction is 1-(5-phospho-beta-D-ribosyl)-5-[(5-phospho-beta-D-ribosylamino)methylideneamino]imidazole-4-carboxamide = 5-[(5-phospho-1-deoxy-D-ribulos-1-ylimino)methylamino]-1-(5-phospho-beta-D-ribosyl)imidazole-4-carboxamide. It functions in the pathway amino-acid biosynthesis; L-histidine biosynthesis; L-histidine from 5-phospho-alpha-D-ribose 1-diphosphate: step 4/9. This chain is 1-(5-phosphoribosyl)-5-[(5-phosphoribosylamino)methylideneamino] imidazole-4-carboxamide isomerase, found in Bacillus velezensis (strain DSM 23117 / BGSC 10A6 / LMG 26770 / FZB42) (Bacillus amyloliquefaciens subsp. plantarum).